The primary structure comprises 154 residues: Ubiquitin-like protein 4A (154 aa).

One can recognise a Ubiquitin-like domain in the interval 1–76 (MILTVKPLQG…LNLVVRPAGE (76 aa)).

As to quaternary structure, component of the bag6/bat3 complex.

It localises to the cytoplasm. It is found in the cytosol. The protein localises to the nucleus. As part of a cytosolic protein quality control complex, the bag6/bat3 complex, maintains misfolded and hydrophobic patches-containing proteins in a soluble state and participates in their proper delivery to the endoplasmic reticulum or alternatively can promote their sorting to the proteasome where they undergo degradation. The bag6/bat3 complex is involved in the post-translational delivery of tail-anchored/type II transmembrane proteins to the endoplasmic reticulum membrane. Similarly, the bag6/bat3 complex also functions as a sorting platform for proteins of the secretory pathway that are mislocalized to the cytosol either delivering them to the proteasome for degradation or to the endoplasmic reticulum. The bag6/bat3 complex also plays a role in the endoplasmic reticulum-associated degradation (ERAD), a quality control mechanism that eliminates unwanted proteins of the endoplasmic reticulum through their retrotranslocation to the cytosol and their targeting to the proteasome. It maintains these retrotranslocated proteins in an unfolded yet soluble state condition in the cytosol to ensure their proper delivery to the proteasome. This Esox lucius (Northern pike) protein is Ubiquitin-like protein 4A (ubl4a).